The chain runs to 479 residues: Muscarinic acetylcholine receptor M4 (479 aa).

Topologically, residues 1–30 (MANFTPVNGSSANQSVRLVTTAHNHLETVE) are extracellular. Asn-8 and Asn-13 each carry an N-linked (GlcNAc...) asparagine glycan. A helical transmembrane segment spans residues 31 to 53 (MVFIATVTGSLSLVTVVGNILVM). Topologically, residues 54-67 (LSIKVNRQLQTVNN) are cytoplasmic. The helical transmembrane segment at 68-88 (YFLFSLACADLIIGAFSMNLY) threads the bilayer. The Extracellular segment spans residues 89–105 (TLYIIKGYWPLGAVVCD). A disulfide bond links Cys-104 and Cys-184. Residues 106–127 (LWLALDYVVSNASVMNLLIISF) traverse the membrane as a helical segment. Residues 128 to 147 (DRYFCVTKPLTYPARRTTKM) lie on the Cytoplasmic side of the membrane. Residues 148-170 (AGLMIAAAWVLSFVLWAPAILFW) form a helical membrane-spanning segment. Residues 171-192 (QFVVGKRTVPDNQCFIQFLSNP) lie on the Extracellular side of the membrane. A helical membrane pass occupies residues 193–215 (AVTFGTAIAAFYLPVVIMTVLYI). At 216–401 (HISLASRSRV…AARERKVTRT (186 aa)) the chain is on the cytoplasmic side. Positions 271 to 334 (LEEAPPPALP…APTLQPRTLN (64 aa)) are disordered. Residues 274–285 (APPPALPPPPRP) show a composition bias toward pro residues. A compositionally biased stretch (polar residues) spans 293 to 303 (NESSSGSATQN). Positions 310-333 (TELSTTEAATTPALPAPTLQPRTL) are enriched in low complexity. Residues 402–422 (IFAILLAFILTWTPYNVMVLV) traverse the membrane as a helical segment. Residues 423–436 (NTFCQSCIPERVWS) lie on the Extracellular side of the membrane. Residues 437–456 (IGYWLCYVNSTINPACYALC) traverse the membrane as a helical segment. The Cytoplasmic segment spans residues 457-479 (NATFKKTFRHLLLCQYRNIGTAR). Thr-459, Thr-463, and Thr-477 each carry phosphothreonine.

This sequence belongs to the G-protein coupled receptor 1 family. Muscarinic acetylcholine receptor subfamily. CHRM4 sub-subfamily.

It is found in the cell membrane. Its subcellular location is the postsynaptic cell membrane. In terms of biological role, the muscarinic acetylcholine receptor mediates various cellular responses, including inhibition of adenylate cyclase, breakdown of phosphoinositides and modulation of potassium channels through the action of G proteins. Primary transducing effect is inhibition of adenylate cyclase. The polypeptide is Muscarinic acetylcholine receptor M4 (Chrm4) (Mus musculus (Mouse)).